Consider the following 406-residue polypeptide: Phosphopentomutase (406 aa).

Aspartate 10, aspartate 305, histidine 310, aspartate 346, histidine 347, and histidine 358 together coordinate Mn(2+).

Belongs to the phosphopentomutase family. Requires Mn(2+) as cofactor.

It localises to the cytoplasm. The catalysed reaction is 2-deoxy-alpha-D-ribose 1-phosphate = 2-deoxy-D-ribose 5-phosphate. It carries out the reaction alpha-D-ribose 1-phosphate = D-ribose 5-phosphate. The protein operates within carbohydrate degradation; 2-deoxy-D-ribose 1-phosphate degradation; D-glyceraldehyde 3-phosphate and acetaldehyde from 2-deoxy-alpha-D-ribose 1-phosphate: step 1/2. Functionally, isomerase that catalyzes the conversion of deoxy-ribose 1-phosphate (dRib-1-P) and ribose 1-phosphate (Rib-1-P) to deoxy-ribose 5-phosphate (dRib-5-P) and ribose 5-phosphate (Rib-5-P), respectively. This is Phosphopentomutase from Agrobacterium fabrum (strain C58 / ATCC 33970) (Agrobacterium tumefaciens (strain C58)).